The chain runs to 223 residues: Small ribosomal subunit protein uS3 (223 aa).

One can recognise a KH type-2 domain in the interval 39 to 117; that stretch reads IREFLRKKPS…RPELNAKLVA (79 aa).

This sequence belongs to the universal ribosomal protein uS3 family. As to quaternary structure, part of the 30S ribosomal subunit. Forms a tight complex with proteins S10 and S14.

Its function is as follows. Binds the lower part of the 30S subunit head. Binds mRNA in the 70S ribosome, positioning it for translation. The polypeptide is Small ribosomal subunit protein uS3 (Chlamydia abortus (strain DSM 27085 / S26/3) (Chlamydophila abortus)).